The following is a 447-amino-acid chain: Probable alpha-galactosidase B (447 aa).

The signal sequence occupies residues 1–25; the sequence is MTTFFSLTTAAAVLTLARGSNALVR. Disulfide bonds link cysteine 45/cysteine 77 and cysteine 127/cysteine 157. Aspartate 155 acts as the Nucleophile in catalysis. 2 N-linked (GlcNAc...) asparagine glycosylation sites follow: asparagine 162 and asparagine 180. Substrate is bound at residue 225 to 229; sequence EWGQA. Asparagine 236 carries an N-linked (GlcNAc...) asparagine glycan. The Proton donor role is filled by aspartate 247. N-linked (GlcNAc...) asparagine glycosylation occurs at asparagine 286.

It belongs to the glycosyl hydrolase 27 family.

It is found in the secreted. The catalysed reaction is Hydrolysis of terminal, non-reducing alpha-D-galactose residues in alpha-D-galactosides, including galactose oligosaccharides, galactomannans and galactolipids.. Hydrolyzes a variety of simple alpha-D-galactoside as well as more complex molecules such as oligosaccharides and polysaccharides. In Aspergillus fumigatus (strain ATCC MYA-4609 / CBS 101355 / FGSC A1100 / Af293) (Neosartorya fumigata), this protein is Probable alpha-galactosidase B (aglB).